The chain runs to 686 residues: Probable serine/threonine-protein kinase pdkA (686 aa).

The segment at Met1–Thr31 is disordered. Residues Pro18 to Thr31 are compositionally biased toward low complexity. The Protein kinase domain maps to Phe69 to Phe449. ATP-binding positions include Ser79 to Gly81 and Lys98. Positions Leu100 to Tyr144 are PIF-pocket. Residues Glu147 to Cys149 and Asp153 each bind ATP. The active-site Proton acceptor is the Asp192. Glu196 and Asp210 together coordinate ATP. Disordered regions lie at residues Phe211–Thr321 and Leu481–Ser584. A compositionally biased stretch (low complexity) spans Ser222–Ser257. The span at Thr258–Arg267 shows a compositional bias: polar residues. Composition is skewed to low complexity over residues Thr268–Ser279, Thr288–Thr321, and Asn503–Gly568. The region spanning Val593–Ser682 is the PH domain.

This sequence belongs to the protein kinase superfamily. AGC Ser/Thr protein kinase family. PDPK1 subfamily.

The catalysed reaction is L-seryl-[protein] + ATP = O-phospho-L-seryl-[protein] + ADP + H(+). It carries out the reaction L-threonyl-[protein] + ATP = O-phospho-L-threonyl-[protein] + ADP + H(+). This chain is Probable serine/threonine-protein kinase pdkA (pdkA), found in Dictyostelium discoideum (Social amoeba).